Reading from the N-terminus, the 61-residue chain is Photosystem II reaction center protein Z (61 aa).

A run of 2 helical transmembrane segments spans residues 5–25 (LTAL…VALA) and 38–58 (TKGF…DGVA).

It belongs to the PsbZ family. PSII is composed of 1 copy each of membrane proteins PsbA, PsbB, PsbC, PsbD, PsbE, PsbF, PsbH, PsbI, PsbJ, PsbK, PsbL, PsbM, PsbT, PsbX, PsbY, PsbZ, Psb30/Ycf12, at least 3 peripheral proteins of the oxygen-evolving complex and a large number of cofactors. It forms dimeric complexes.

The protein resides in the plastid. It localises to the chloroplast thylakoid membrane. In terms of biological role, may control the interaction of photosystem II (PSII) cores with the light-harvesting antenna, regulates electron flow through the 2 photosystem reaction centers. PSII is a light-driven water plastoquinone oxidoreductase, using light energy to abstract electrons from H(2)O, generating a proton gradient subsequently used for ATP formation. This Phaeodactylum tricornutum (strain CCAP 1055/1) protein is Photosystem II reaction center protein Z.